The chain runs to 130 residues: uncharacterized protein (130 aa).

This is an uncharacterized protein from Pyrococcus horikoshii (strain ATCC 700860 / DSM 12428 / JCM 9974 / NBRC 100139 / OT-3).